Consider the following 321-residue polypeptide: Putative membrane-bound redox modulator Alx (321 aa).

The Periplasmic portion of the chain corresponds to 1-6; sequence MNTVGT. The helical transmembrane segment at 7 to 27 threads the bilayer; it reads PLLWGGFAVVVTIMLAIDLLL. The Cytoplasmic portion of the chain corresponds to 28-43; it reads QGRRGAHAMTMKQAAA. The helical transmembrane segment at 44–64 threads the bilayer; the sequence is WSLVWVTLSLLFNAAFWWYLV. Topologically, residues 65–89 are periplasmic; that stretch reads QTEGRAVADPQALAFLTGYLIEKSL. Residues 90-110 form a helical membrane-spanning segment; it reads AVDNVFVWLMLFSYFSVPAAL. The Cytoplasmic segment spans residues 111–113; that stretch reads QRR. The helical transmembrane segment at 114–134 threads the bilayer; sequence VLVYGVLGAIVLRTIMIFTGS. Trp-135 is a topological domain (periplasmic). Residues 136–156 traverse the membrane as a helical segment; sequence LISQFDWILYIFGAFLLFTGV. The Cytoplasmic portion of the chain corresponds to 157-198; that stretch reads KMALAHEDESGIGDKPLVRWLRGHLRMTDTIDNEHFFVRKNG. The helical transmembrane segment at 199–219 threads the bilayer; the sequence is LLYATPLMLVLILVELSDVIF. Residues 220-225 lie on the Periplasmic side of the membrane; it reads AVDSIP. Residues 226 to 246 form a helical membrane-spanning segment; the sequence is AIFAVTTDPFIVLTSNLFAIL. Over 247–261 the chain is Cytoplasmic; the sequence is GLRAMYFLLAGVAER. Residues 262–282 traverse the membrane as a helical segment; that stretch reads FSMLKYGLAVILVFIGIKMLI. The Periplasmic portion of the chain corresponds to 283–286; it reads VDFY. A helical transmembrane segment spans residues 287-307; it reads HIPIAVSLGVVFGILVMTFII. Residues 308-321 lie on the Cytoplasmic side of the membrane; it reads NAWVNYRHDKQRVE.

This sequence belongs to the TerC family.

It is found in the cell inner membrane. Its function is as follows. Has been proposed to be a redox modulator. This Escherichia coli O6:H1 (strain CFT073 / ATCC 700928 / UPEC) protein is Putative membrane-bound redox modulator Alx (alx).